The following is a 146-amino-acid chain: Antiholin-like protein LrgA (146 aa).

Transmembrane regions (helical) follow at residues 7–29 (YGFLTQAFIFAVIMLVSNMIAAI), 34–53 (IPASVVGLVLLFLLLCLKVI), 65–87 (LTSLIGFLFVPSGISVMNSLGVM), and 97–119 (VILLATIILLGATGLFSQLILSL).

This sequence belongs to the CidA/LrgA family. LrgA subfamily.

Its subcellular location is the cell membrane. Its function is as follows. Inhibits the expression or activity of extracellular murein hydrolases by interacting, possibly with LrgB, with the holin-like protein CidA. The LrgAB and CidA proteins may affect the proton motive force of the membrane. May be involved in programmed cell death (PCD), possibly triggering PCD in response to antibiotics and environmental stresses. This is Antiholin-like protein LrgA from Bacillus subtilis (strain 168).